The following is a 371-amino-acid chain: Maltose/maltodextrin import ATP-binding protein MalK (371 aa).

Positions 4–234 (VQLQNVTKAW…PADRFVAGFI (231 aa)) constitute an ABC transporter domain. Position 36–43 (36–43 (GPSGCGKS)) interacts with ATP.

The protein belongs to the ABC transporter superfamily. Maltooligosaccharide importer (TC 3.A.1.1.1) family. As to quaternary structure, the complex is composed of two ATP-binding proteins (MalK), two transmembrane proteins (MalG and MalK) and a solute-binding protein (MalE).

The protein resides in the cell inner membrane. The catalysed reaction is D-maltose(out) + ATP + H2O = D-maltose(in) + ADP + phosphate + H(+). In terms of biological role, part of the ABC transporter complex MalEFGK involved in maltose/maltodextrin import. Responsible for energy coupling to the transport system. This chain is Maltose/maltodextrin import ATP-binding protein MalK, found in Escherichia coli O6:K15:H31 (strain 536 / UPEC).